We begin with the raw amino-acid sequence, 299 residues long: Protein LacX, chromosomal (299 aa).

This chain is Protein LacX, chromosomal (lacX), found in Lactococcus lactis subsp. lactis (Streptococcus lactis).